A 489-amino-acid chain; its full sequence is Glutamate--tRNA ligase (489 aa).

The 'HIGH' region motif lies at 12–22; sequence PSPTGIPHVGM. The 'KMSKS' region motif lies at 256-260; the sequence is KLSKR. Lysine 259 lines the ATP pocket.

It belongs to the class-I aminoacyl-tRNA synthetase family. Glutamate--tRNA ligase type 1 subfamily. Monomer.

The protein resides in the cytoplasm. The enzyme catalyses tRNA(Glu) + L-glutamate + ATP = L-glutamyl-tRNA(Glu) + AMP + diphosphate. Catalyzes the attachment of glutamate to tRNA(Glu) in a two-step reaction: glutamate is first activated by ATP to form Glu-AMP and then transferred to the acceptor end of tRNA(Glu). This chain is Glutamate--tRNA ligase, found in Mycobacterium marinum (strain ATCC BAA-535 / M).